The sequence spans 123 residues: Large ribosomal subunit protein bL17 (123 aa).

The protein belongs to the bacterial ribosomal protein bL17 family. In terms of assembly, part of the 50S ribosomal subunit. Contacts protein L32.

This chain is Large ribosomal subunit protein bL17, found in Borreliella burgdorferi (strain ZS7) (Borrelia burgdorferi).